Consider the following 153-residue polypeptide: Heavy metal-associated isoprenylated plant protein 26 (153 aa).

One can recognise an HMA domain in the interval 25–89 (LQTVEIKVKM…MSHRTGKKVE (65 aa)). The a metal cation site is built by Cys-36 and Cys-39. Cys-150 is subject to Cysteine methyl ester. A lipid anchor (S-farnesyl cysteine) is attached at Cys-150. A propeptide spans 151 to 153 (VVM) (removed in mature form).

It belongs to the HIPP family. In terms of assembly, interacts with ZHD11/HB29 and ACBP2 (via ankyrin repeats). May also interact with HB21. Expressed in roots, stems and flowers. Lower expression in siliques and leaves. Expressed in the vascular tissues. Detected in lateral roots, shoot apical meristem, petals of unopened flowers and weak expression in leaf vasculature.

It localises to the nucleus membrane. The protein resides in the cell membrane. In terms of biological role, heavy-metal-binding protein. Binds lead, cadmium and copper. May be involved in heavy-metal transport. May be involved in cadmium transport and play a role in cadmium detoxification. The chain is Heavy metal-associated isoprenylated plant protein 26 from Arabidopsis thaliana (Mouse-ear cress).